We begin with the raw amino-acid sequence, 784 residues long: Transcription factor kayak (784 aa).

Composition is skewed to low complexity over residues 97–106 (QPTQSAYQQQ), 115–126 (NNNNNSNNNANM), and 198–227 (QQQQ…QQQQ). Disordered regions lie at residues 97–126 (QPTQ…NANM), 196–231 (YNQQ…HLPT), 358–404 (PGSD…GNGS), and 421–464 (SGRG…KRRI). Positions 365–378 (SNGSWNEGQLNDDQ) are enriched in polar residues. Residues 380 to 397 (TTDTSSAATDSTSYQNGG) are compositionally biased toward low complexity. Residues 421–438 (SGRGSGLAANSTTSNSAT) show a composition bias toward polar residues. The region spanning 459–522 (EEKRRIRRER…SQLEYVLQTH (64 aa)) is the bZIP domain. The segment at 461 to 463 (KRR) is basic motif. A leucine-zipper region spans residues 464–471 (IRRERNKL). S594 carries the post-translational modification Phosphoserine. 2 disordered regions span residues 616–635 (QDGA…TPAK) and 759–784 (PTCS…LVSL).

Belongs to the bZIP family. Fos subfamily. As to quaternary structure, homodimer. Heterodimer with Jra. The kay-Jra heterodimer binds more stably to the AP-1 site than either of the two proteins alone.

The protein localises to the nucleus. Functionally, developmentally regulated transcription factor AP-1 binds and recognizes the enhancer DNA sequence: 5'-TGA[CG]TCA-3'. May play a role in the function or determination of a particular subset of cells in the developing embryo. It is able to carry out its function either independently of or in conjunction with Jra. The polypeptide is Transcription factor kayak (Drosophila mojavensis (Fruit fly)).